The following is a 469-amino-acid chain: Protein apterous (469 aa).

Disordered stretches follow at residues 21–44 and 111–141; these read GPGAREKSPTPPVAHQGSNQCGSA and EVSDETTSGISFKTEPFGPPSSPESTSDSKI. LIM zinc-binding domains are found at residues 148 to 200 and 210 to 263; these read CSGC…CKND and CSRC…CRTH. A DNA-binding region (homeobox) is located at residues 367–426; sequence TKRMRTSFKHHQLRTMKSYFAINHNPDAKDLKQLSQKTGLPKRVLQVWFQNARAKWRRMM.

As to expression, expressed in PNS and CNS.

The protein resides in the nucleus. Required for the normal development of the wing and halter imaginal disks. In Drosophila melanogaster (Fruit fly), this protein is Protein apterous (ap).